The following is a 476-amino-acid chain: Homeobox even-skipped homolog protein 2 (476 aa).

Disordered stretches follow at residues 82–113 (TGSESTVSSEISSAAESRKKPGHYSEAAAEAD) and 142–185 (KGYA…GSGA). Low complexity-rich tracts occupy residues 84 to 96 (SESTVSSEISSAA) and 147 to 159 (SGSAAGTTTSASG). A compositionally biased stretch (gly residues) spans 160-183 (SGLGSLHGGSGGSGGSAALGGSGS). A DNA-binding region (homeobox) is located at residues 188-247 (VRRYRTAFTREQIARLEKEFYRENYVSRPRRCELAAALNLPETTIKVWFQNRRMKDKRQR).

The protein belongs to the even-skipped homeobox family.

Its subcellular location is the nucleus. This Homo sapiens (Human) protein is Homeobox even-skipped homolog protein 2 (EVX2).